Reading from the N-terminus, the 435-residue chain is Zinc finger CCCH domain-containing protein 17 (435 aa).

2 disordered regions span residues 1 to 30 and 58 to 107; these read MDIE…SSTS and TAKR…GPRH. The C3H1-type 1 zinc finger occupies 28-54; it reads STSGKVCIHWRAGRCNRFPCPYLHSEL. Gly residues predominate over residues 77-103; that stretch reads SGGGGGRGAGGAGGPNKWGRGPGGADG. The C3H1-type 2 zinc finger occupies 108–135; sequence KVPDRPCRYFLAGDCSYGEKCRYPHSYS. 7 WD repeats span residues 148-189, 191-225, 227-264, 271-308, 311-348, 355-395, and 397-435; these read GHEK…GVIN, GREI…EMNL, GPTG…NGFE, GHQL…CIQT, DHTG…SLEV, EHGA…DRGR, and FSKQ…SQTK.

The chain is Zinc finger CCCH domain-containing protein 17 from Oryza sativa subsp. japonica (Rice).